Reading from the N-terminus, the 672-residue chain is MTELLKISLPDGSVREMEAGATPADVAAAIGPGLAKAALAAKVDGEVRDLNRPFEGDAELALITSRDEEEALELARHDYAHVLAEAVQALWPGTQITFGPATDDGFYYDVKAPDSRDPFGMDDLPAIEEKMREIIKADKPLVREVWSREQLIEKWEAEGEVFKAEWAKELPEDEELTVYWSGEPGGEDSWLDMCRGPHLASTGKLDPQAFKLMRVAGAYWRGDQRNPQLTRIYGTGWLNKKQLNAHLHRLEEAAKRDHRKLGREMDLFHLQEEAHGSVFWHPQGYKIWRELEAYMRRKMDGAGYREIKTPQVMDARQWEQSGHWGKYRENMFVIPDEIPNTEDEGELVSKDADWMALKPMNCPAHVLVFKQGITSYRDLPIRLGEMGCCHRNEPHGALHGLMRVRQFTQDDAHIFCTEDQVVEEVRAFCKLADEVYRDFGFDYDVKLALRPEQRFGSEEDWDKAEQELRDAVAEAGMANDDYGWEELPGEGAFYAPKLEWHLTDAIGRTWQVGTIQGDRVLPERLDATYVGEDGGKHRPVMLHRAIFGSYERFIGILIEHFAGRLPVWLAPTQAVVATIVSDADGYAKEAVAKLEAAGIRVDGDLRNEKINFKVREHSLAKVPHLLVVGKREAEEGTVAVRTLGEKEQQVMSLDDAIAMLKDAATPPDLRDG.

The 64-residue stretch at 1–64 folds into the TGS domain; that stretch reads MTELLKISLP…EGDAELALIT (64 aa). Residues 257–566 form a catalytic region; sequence DHRKLGREMD…LIEHFAGRLP (310 aa). Zn(2+)-binding residues include C362, H413, and H543.

Belongs to the class-II aminoacyl-tRNA synthetase family. As to quaternary structure, homodimer. The cofactor is Zn(2+).

Its subcellular location is the cytoplasm. It catalyses the reaction tRNA(Thr) + L-threonine + ATP = L-threonyl-tRNA(Thr) + AMP + diphosphate + H(+). Catalyzes the attachment of threonine to tRNA(Thr) in a two-step reaction: L-threonine is first activated by ATP to form Thr-AMP and then transferred to the acceptor end of tRNA(Thr). Also edits incorrectly charged L-seryl-tRNA(Thr). In Erythrobacter litoralis (strain HTCC2594), this protein is Threonine--tRNA ligase.